The sequence spans 660 residues: Acetyl-coenzyme A synthetase (660 aa).

Residues 197–200 (RGGK) and threonine 317 contribute to the CoA site. Residues 397 to 399 (GEP), 421 to 426 (DTFWQT), aspartate 512, and arginine 528 each bind ATP. A CoA-binding site is contributed by serine 536. Arginine 539 is an ATP binding site. 2 residues coordinate Mg(2+): valine 550 and valine 555. At lysine 625 the chain carries N6-acetyllysine.

It belongs to the ATP-dependent AMP-binding enzyme family. Mg(2+) is required as a cofactor. Post-translationally, acetylated. Deacetylation by the SIR2-homolog deacetylase activates the enzyme.

It carries out the reaction acetate + ATP + CoA = acetyl-CoA + AMP + diphosphate. Its function is as follows. Catalyzes the conversion of acetate into acetyl-CoA (AcCoA), an essential intermediate at the junction of anabolic and catabolic pathways. AcsA undergoes a two-step reaction. In the first half reaction, AcsA combines acetate with ATP to form acetyl-adenylate (AcAMP) intermediate. In the second half reaction, it can then transfer the acetyl group from AcAMP to the sulfhydryl group of CoA, forming the product AcCoA. The chain is Acetyl-coenzyme A synthetase from Cupriavidus metallidurans (strain ATCC 43123 / DSM 2839 / NBRC 102507 / CH34) (Ralstonia metallidurans).